The primary structure comprises 335 residues: Glucokinase (335 aa).

ATP is bound at residue 11–16; that stretch reads ADIGGT.

This sequence belongs to the bacterial glucokinase family.

It is found in the cytoplasm. It catalyses the reaction D-glucose + ATP = D-glucose 6-phosphate + ADP + H(+). The protein is Glucokinase of Stenotrophomonas maltophilia (strain R551-3).